The sequence spans 610 residues: MWTFPVDYDVIVIGAGHAGCEAAYCAAKMGASVLLLTSNLDTIAKLSCNPAVGGIGKGHIVREIDALGGIMAEITDLSGIQFRILNQTKGPAVRAPRAQVDKQLYHIHMKRLLEQVPGLHIMQGTAEALLDNGEKVLGVSTKEGWAYLGKTVVLSSGTFMRGLIHIGTQNFSGGRLGDAASLGLSEDLKRLGFPLGRLKTGTPARLLASSIDFSVMEEQPGDHNVCFVHRNEMFVPTLPQVSCHITHTTDQTKDLITKNLHRSALYGGRIEGVGPRYCPSIEDKIVKFADKDRHHIFIEPEGLNTQEVYVNGLSTSMPFDVQYDIIRSVSGLENAIITRPAYAIEYDYVHGNVIFPSLESKLIEGLFLCGQINGTTGYEEAAAQGLIAGVNAVNKVLRRPPFVPSRQESYIGVMLDDLTTQVLDEPYRMFTSRAEHRLLLRQDNAGMRLSHYGHSLGLLSSERYAMFQEQKACIEQEKERLSKTFRKYGDTVVPLTRVLCRPEVSYQQLLTEFPADVRDLGPIVGASLEMEIKYSGYISRQQTLIRSMERSENISIPEDIDYHSISALSLEAREKLSKFTPRTIGSAARISGISVADIQVLMVSLKKDAH.

An FAD-binding site is contributed by 14–19; sequence GAGHAG. 274–288 lines the NAD(+) pocket; that stretch reads GPRYCPSIEDKIVKF.

This sequence belongs to the MnmG family. In terms of assembly, homodimer. Heterotetramer of two MnmE and two MnmG subunits. FAD serves as cofactor.

It localises to the cytoplasm. Functionally, NAD-binding protein involved in the addition of a carboxymethylaminomethyl (cmnm) group at the wobble position (U34) of certain tRNAs, forming tRNA-cmnm(5)s(2)U34. This chain is tRNA uridine 5-carboxymethylaminomethyl modification enzyme MnmG, found in Chlamydia trachomatis serovar L2b (strain UCH-1/proctitis).